Consider the following 394-residue polypeptide: Acetate kinase (394 aa).

Asparagine 10 serves as a coordination point for Mg(2+). Position 17 (lysine 17) interacts with ATP. A substrate-binding site is contributed by arginine 87. Catalysis depends on aspartate 144, which acts as the Proton donor/acceptor. ATP-binding positions include 204-208 (HLGNG), 279-281 (DMR), and 327-331 (GIGEN). A Mg(2+)-binding site is contributed by glutamate 381.

This sequence belongs to the acetokinase family. As to quaternary structure, homodimer. The cofactor is Mg(2+). Mn(2+) serves as cofactor.

The protein localises to the cytoplasm. It catalyses the reaction acetate + ATP = acetyl phosphate + ADP. It functions in the pathway metabolic intermediate biosynthesis; acetyl-CoA biosynthesis; acetyl-CoA from acetate: step 1/2. In terms of biological role, catalyzes the formation of acetyl phosphate from acetate and ATP. Can also catalyze the reverse reaction. The sequence is that of Acetate kinase from Pseudomonas aeruginosa (strain LESB58).